Reading from the N-terminus, the 342-residue chain is (Lyso)-N-acylphosphatidylethanolamine lipase (342 aa).

An AB hydrolase-1 domain is found at 70 to 323 (PLVMVHGFGG…EIEGASHHVY (254 aa)).

Belongs to the peptidase S33 family. ABHD4/ABHD5 subfamily. In terms of tissue distribution, highest levels in the CNS and in testis, intermediate levels in liver and kidney. Hardly detectable in heart.

It catalyses the reaction N-hexadecanoyl-1,2-di-(9Z-octadecenoyl)-sn-glycero-3-phosphoethanolamine + H2O = N-hexadecanoyl-1-(9Z-octadecenoyl)-sn-glycero-3-phosphoethanolamine + (9Z)-octadecenoate + H(+). The catalysed reaction is an N-acyl-1,2-diacyl-sn-glycero-3-phosphoethanolamine + H2O = N,1-diacyl-sn-glycero-3-phosphoethanolamine + a fatty acid + H(+). The enzyme catalyses N-hexadecanoyl-1-(9Z-octadecenoyl)-sn-glycero-3-phosphoethanolamine + H2O = N-hexadecanoyl-sn-glycero-3-phosphoethanolamine + (9Z)-octadecenoate + H(+). It carries out the reaction N-octadecanoyl-1-(9Z-octadecenoyl)-sn-glycero-3-phosphoethanolamine + H2O = N-octadecanoyl-sn-glycero-3-phospho-ethanolamine + (9Z)-octadecenoate + H(+). It catalyses the reaction N-eicosanoyl-1-(9Z-octadecenoyl)-sn-glycero-3-phosphoethanolamine + H2O = N-eicosanoyl-sn-glycero-3-phosphoethanolamine + (9Z)-octadecenoate + H(+). The catalysed reaction is N,1-di-(9Z-octadecenoyl)-sn-glycero-3-phosphoethanolamine + H2O = N-(9Z-octadecenoyl)-sn-glycero-3-phosphoethanolamine + (9Z)-octadecenoate + H(+). The enzyme catalyses N-(5Z,8Z,11Z,14Z-eicosatetraenoyl)-1-(9Z-octadecenoyl)-sn-glycero-3-phosphoethanolamine + H2O = N-(5Z,8Z,11Z,14Z-eicosatetraenoyl)-sn-glycero-3-phosphoethanolamine + (9Z)-octadecenoate + H(+). It carries out the reaction 1-octadecanoyl-2-(9Z-octadecenoyl)-sn-glycero-3-phospho-(N-hexadecanoyl)-serine + H2O = 1-octadecanoyl-2-hydroxy-sn-glycero-3-phospho-(N-hexadecanoyl)-serine + (9Z)-octadecenoate + H(+). It catalyses the reaction 1-O-(1Z-octadecenoyl)-2-(9Z-octadecenoyl)-sn-glycero-3-phospho-N-hexadecanoyl-ethanolamine + H2O = 1-O-(1Z-octadecenyl)-sn-glycero-3-phospho-N-hexadecanoyl-ethanolamine + (9Z)-octadecenoate + H(+). The catalysed reaction is N,1-diacyl-sn-glycero-3-phosphoethanolamine + H2O = N-acyl-sn-glycero-3-phosphoethanolamine + a fatty acid + H(+). Lysophospholipase selective for N-acyl phosphatidylethanolamine (NAPE). Contributes to the biosynthesis of N-acyl ethanolamines, including the endocannabinoid anandamide by hydrolyzing the sn-1 and sn-2 acyl chains from N-acyl phosphatidylethanolamine (NAPE) generating glycerophospho-N-acyl ethanolamine (GP-NAE), an intermediate for N-acyl ethanolamine biosynthesis. Hydrolyzes substrates bearing saturated, monounsaturated, polyunsaturated N-acyl chains. Shows no significant activity towards other lysophospholipids, including lysophosphatidylcholine, lysophosphatidylethanolamine and lysophosphatidylserine. The polypeptide is (Lyso)-N-acylphosphatidylethanolamine lipase (Mus musculus (Mouse)).